We begin with the raw amino-acid sequence, 217 residues long: Eukaryotic translation initiation factor 4E (217 aa).

Positions 1–11 are enriched in low complexity; the sequence is MATVEPETTPT. The segment at 1 to 27 is disordered; sequence MATVEPETTPTTNPPPAEEEKTESNQE. Ala2 carries the N-acetylalanine modification. Thr22 is subject to Phosphothreonine. An EIF4EBP1/2/3 binding region spans residues 37–40; the sequence is HPLQ. 56–57 is an mRNA binding site; that stretch reads WQ. Residues 73–77 form an EIF4EBP1/2/3 binding region; it reads WALYN. An mRNA-binding site is contributed by 102-103; that stretch reads WE. Residues 132–139 form an EIF4EBP1/2/3 binding region; the sequence is ETLLCLIG. MRNA contacts are provided by residues 157–162 and 205–207; these read RAKGDK and TKS. At Ser209 the chain carries Phosphoserine; by PKC and MKNK2.

It belongs to the eukaryotic initiation factor 4E family. In terms of assembly, eIF4F is a multi-subunit complex, the composition of which varies with external and internal environmental conditions. It is composed of at least EIF4A, EIF4E and EIF4G1/EIF4G3. EIF4E is also known to interact with other partners. Interacts with EIF4ENIF1/4E-T; promotes recruitment to P-bodies and import into the nucleus. Hypophosphorylated EIF4EBP1, EIF4EBP2 and EIF4EBP3 compete with EIF4G1/EIF4G3 to interact with EIF4E; insulin stimulated MAP-kinase (MAPK1 and MAPK3) phosphorylation of EIF4EBP1 causes dissociation of the complex allowing EIF4G1/EIF4G3 to bind and consequent initiation of translation. Interacts mutually exclusive with EIF4A1 or EIF4A2. Interacts with NGDN and PIWIL2. Component of the CYFIP1-EIF4E-FMR1 complex composed of CYFIP, EIF4E and FMR1. Interacts directly with CYFIP1. Interacts with CLOCK. Binds to MKNK2 in nucleus. Interacts with LIMD1, WTIP and AJUBA. Interacts with APOBEC3G in an RNA-dependent manner. Interacts with LARP1. Interacts with METTL3. Interacts with RBM24; this interaction prevents EIF4E from binding to p53/TP53 mRNA and inhibits the assembly of translation initiation complex. Interacts with DDX3X; interaction is direct and in an RNA-independent manner; this interaction enhances EIF4E cap-binding ability and is required for the repression of cap-dependent translation and the increase of IRES-mediated translation. DDX3X competes with EIF4G1 for interaction with EIF4E. Interacts with EIF4G1; which in a mutual exclusive interaction associates either with EIF1 or with EIF4E on a common binding site. Interacts with BTG4 and CNOT7. Interacts with LRPPRC (via N-terminus); the interaction promotes association of EIF4E with 4ESE-containing mRNAs. Interacts with mRNA cleavage enzyme CPSF3 and its cofactor CPSF1. Interacts (via RING-type zinc finger) with PML; the interaction results in conformational changes of both interacting proteins and reduces EIF4E affinity for the 5' m7G cap of mRNA, thus reducing EIF4E-mediated mRNA nuclear export. Interacts with homeobox protein HHEX/PRH; the interaction inhibits EIF4E-mediated mRNA nuclear export. Interacts with homeobox protein HOXA9; the interaction positively regulates EIF4E-mediated mRNA nuclear export. Interacts with homeobox protein EMX2. As to quaternary structure, (Microbial infection) Interacts with murine norovirus viral genome-linked protein; this interaction plays a role in translation of viral proteins. Phosphorylation increases the ability of the protein to bind to mRNA caps and to form the eIF4F complex. Phosphorylation also enhances its mRNA transport function. Phosphorylation at Ser-209 is not essential for protein synthesis.

It localises to the cytoplasm. Its subcellular location is the P-body. The protein localises to the stress granule. It is found in the nucleus. The protein resides in the nucleus speckle. It localises to the nuclear body. In terms of biological role, acts in the cytoplasm to initiate and regulate protein synthesis and is required in the nucleus for export of a subset of mRNAs from the nucleus to the cytoplasm which promotes processes such as RNA capping, processing and splicing. Component of the protein complex eIF4F, which is involved in the recognition of the mRNA cap, ATP-dependent unwinding of 5'-terminal secondary structure and recruitment of mRNA to the ribosome. This protein recognizes and binds the 7-methylguanosine (m7G)-containing mRNA cap during an early step in the initiation of protein synthesis and facilitates ribosome binding by inducing the unwinding of the mRNAs secondary structures. Together with EIF4G1, antagonizes the scanning promoted by EIF1-EIF4G1 and is required for TISU translation, a process where the TISU element recognition makes scanning unnecessary. In addition to its role in translation initiation, also acts as a regulator of translation and stability in the cytoplasm. Component of the CYFIP1-EIF4E-FMR1 complex which binds to the mRNA cap and mediates translational repression: in the complex, EIF4E mediates the binding to the mRNA cap. Component of a multiprotein complex that sequesters and represses translation of proneurogenic factors during neurogenesis. In P-bodies, component of a complex that mediates the storage of translationally inactive mRNAs in the cytoplasm and prevents their degradation. May play an important role in spermatogenesis through translational regulation of stage-specific mRNAs during germ cell development. As well as its roles in translation, also involved in mRNA nucleocytoplasmic transport. Its role in mRNA export from the nucleus to the cytoplasm relies on its ability to bind the m7G cap of RNAs and on the presence of the 50-nucleotide EIF4E sensitivity element (4ESE) in the 3'UTR of sensitive transcripts. Interaction with the 4ESE is mediated by LRPPRC which binds simultaneously to both EIF4E and the 4ESE, thereby acting as a platform for assembly for the RNA export complex. EIF4E-dependent mRNA export is independent of ongoing protein or RNA synthesis and is also NFX1-independent but is XPO1-dependent with LRPPRC interacting with XPO1 to form an EIF4E-dependent mRNA export complex. Alters the composition of the cytoplasmic face of the nuclear pore to promote RNA export by reducing RANBP2 expression, relocalizing nucleoporin NUP214 and increasing expression of RANBP1 and RNA export factors DDX19 and GLE1. Promotes the nuclear export of cyclin CCND1 mRNA. Promotes the nuclear export of NOS2/iNOS mRNA. Promotes the nuclear export of MDM2 mRNA. Also promotes the export of additional mRNAs, including others involved in the cell cycle. In the nucleus, binds to capped splice factor-encoding mRNAs and stimulates their nuclear export to enhance splice factor production by increasing their cytoplasmic availability to the translation machinery. May also regulate splicing through interaction with the spliceosome in an RNA and m7G cap-dependent manner. Also binds to some pre-mRNAs and may play a role in their recruitment to the spliceosome. Promotes steady-state capping of a subset of coding and non-coding RNAs by mediating nuclear export of capping machinery mRNAs including RNMT, RNGTT and RAMAC to enhance their translation. Stimulates mRNA 3'-end processing by promoting the expression of several core cleavage complex factors required for mRNA cleavage and polyadenylation, and may also have a direct effect through its interaction with the CPSF3 cleavage enzyme. Rescues cells from apoptosis by promoting activation of serine/threonine-protein kinase AKT1 through mRNA export of NBS1 which potentiates AKT1 phosphorylation and also through mRNA export of AKT1 effectors, allowing for increased production of these proteins. The protein is Eukaryotic translation initiation factor 4E of Mus musculus (Mouse).